The following is an 88-amino-acid chain: MSAPTSIPALDEASKKELESFLEQEQAKAKLQASIHELTNTCWNTCITGGISSKFSKSEAQCLENCVDRFLDSSLYIVRQIEAQKQQI.

A Twin CX3C motif motif is present at residues 42-66; the sequence is CWNTCITGGISSKFSKSEAQCLENC. 2 cysteine pairs are disulfide-bonded: Cys-42/Cys-66 and Cys-46/Cys-62.

Belongs to the small Tim family. In terms of assembly, heterohexamer; composed of 3 copies of TIM8 and 3 copies of TIM13, named soluble 70 kDa complex. Associates with the TIM22 complex, whose core is composed of TIM22 and TIM54. Interacts with the transmembrane regions of multi-pass transmembrane proteins in transit.

It localises to the mitochondrion inner membrane. Functionally, mitochondrial intermembrane chaperone that participates in the import and insertion of some multi-pass transmembrane proteins into the mitochondrial inner membrane. Also required for the transfer of beta-barrel precursors from the TOM complex to the sorting and assembly machinery (SAM complex) of the outer membrane. Acts as a chaperone-like protein that protects the hydrophobic precursors from aggregation and guide them through the mitochondrial intermembrane space. The TIM8-TIM13 complex is non essential and only mediates the import of few proteins, while the predominant TIM9-TIM10 70 kDa complex is crucial and mediates the import of much more proteins. The polypeptide is Mitochondrial import inner membrane translocase subunit TIM8 (TIM8) (Cryptococcus neoformans var. neoformans serotype D (strain B-3501A) (Filobasidiella neoformans)).